A 60-amino-acid polypeptide reads, in one-letter code: UPF0291 protein CTC_01690.1 (60 aa).

Belongs to the UPF0291 family.

Its subcellular location is the cytoplasm. This is UPF0291 protein CTC_01690.1 from Clostridium tetani (strain Massachusetts / E88).